We begin with the raw amino-acid sequence, 368 residues long: Cyclic GMP-AMP synthase-like receptor (368 aa).

Residues Ser60 and Glu72–Asp74 contribute to the ATP site. The Mg(2+) site is built by Glu72, Asp74, and Asp190. GTP-binding positions include Asp190 and Arg229–Glu236. ATP contacts are provided by residues Tyr233–Glu236, Lys254, and Ser268–Lys272.

This sequence belongs to the mab-21 family. Mg(2+) is required as a cofactor. It depends on Mn(2+) as a cofactor.

It carries out the reaction GTP + ATP = 3',2'-cGAMP + 2 diphosphate. The catalysed reaction is GTP + ATP = pppA(2'-5')pG + diphosphate. The enzyme catalyses pppA(2'-5')pG = 3',2'-cGAMP + diphosphate. With respect to regulation, the enzyme activity is specifically activated by double-stranded RNA (dsRNA). Functionally, nucleotidyltransferase that catalyzes the formation of cyclic GMP-AMP (3',2'-cGAMP) from ATP and GTP and plays a key role in innate immunity. Synthesizes 3',2'-cGAMP in a two-step reaction through production of the linear intermediate pppA(2'-5')pG. Acts as a key sensor of double-stranded RNA (dsRNA), the presence of dsRNA in the cytoplasm being a danger signal that triggers the immune responses. Directly binds dsRNA, activating the nucleotidyltransferase activity, leading to synthesis of 3',2'-cGAMP, a second messenger that binds to and activates Sting, thereby triggering the antiviral immune response via activation of the NF-kappa-B transcription factor Rel (Relish). The sequence is that of Cyclic GMP-AMP synthase-like receptor from Lucilia cuprina (Green bottle fly).